A 131-amino-acid chain; its full sequence is uncharacterized protein (131 aa).

The interval 112–131 is disordered; it reads LTDNPGAVRKSQKSLIPPYN.

This is an uncharacterized protein from Fowl adenovirus A serotype 1 (strain CELO / Phelps) (FAdV-1).